We begin with the raw amino-acid sequence, 748 residues long: WD repeat-containing protein 91 (748 aa).

Residues 183–228 adopt a coiled-coil conformation; that stretch reads QRTNQVQEENEVLRQKLFALQAEIHRLKKEEQQQEEEAAALVQHKL. S257 carries the phosphoserine modification. Over residues 266 to 279 the composition is skewed to low complexity; sequence LLPQSKKSPSRLSP. Residues 266-368 are disordered; the sequence is LLPQSKKSPS…PEVSGAEAEP (103 aa). The segment covering 284–300 has biased composition (polar residues); that stretch reads PQAQSSAKKDSFSSQAT. 2 positions are modified to phosphoserine: S289 and S294. Basic and acidic residues predominate over residues 333–344; sequence RLQDHGKERREL. Over residues 345-354 the composition is skewed to polar residues; it reads LSTSSSQSQC. WD repeat units follow at residues 407 to 446, 449 to 489, 512 to 556, 561 to 600, 603 to 642, 665 to 703, and 710 to 748; these read EHHS…QTKA, ISKS…NLCE, VCSA…QQLQ, PEPI…CAMS, AHCG…LKVS, VQVP…KVLE, and GHRA…AHKL.

It belongs to the WD repeat WDR91 family. In terms of assembly, interacts with WDR81; involved in early to late endosome cargo transport. Interacts with BECN1; negatively regulates the PI3 kinase/PI3K activity associated with endosomal membranes.

The protein localises to the early endosome membrane. It localises to the late endosome membrane. In terms of biological role, functions as a negative regulator of the PI3 kinase/PI3K activity associated with endosomal membranes via BECN1, a core subunit of the PI3K complex. By modifying the phosphatidylinositol 3-phosphate/PtdInsP3 content of endosomal membranes may regulate endosome fusion, recycling, sorting and early to late endosome transport. It is for instance, required for the delivery of cargos like BST2/tetherin from early to late endosome and thereby participates indirectly to their degradation by the lysosome. May play a role in meiosis. The sequence is that of WD repeat-containing protein 91 from Mus musculus (Mouse).